A 153-amino-acid chain; its full sequence is MKKILLMLSLLFFTTAGFSEVSDTLVTGGYDKQAMSDAIKHARKETDKFIEVMNKKDADTFAVKAPITDHGRTEHFWLTDVTYSNGMFIGVISNDPGIVTNVEYGQEWKIKKEDISDWMYTRGDKIYGGYTIDPLLVTYPKEEADELRAKLVR.

This is an uncharacterized protein from Escherichia coli (strain K12).